Reading from the N-terminus, the 290-residue chain is HTH-type transcriptional activator RhaR (290 aa).

Positions 179 to 277 constitute an HTH araC/xylS-type domain; the sequence is DLIMSALQQS…GMTPRDYRQR (99 aa). DNA-binding regions (H-T-H motif) lie at residues 196–217 and 244–267; these read ADFCHKNQLVERSLKQLFRQQT and ISDIAARCGFEDSNYFSAVFTREA.

In terms of assembly, binds DNA as a dimer.

It is found in the cytoplasm. Its function is as follows. Activates expression of the rhaSR operon in response to L-rhamnose. The chain is HTH-type transcriptional activator RhaR from Yersinia pseudotuberculosis serotype O:1b (strain IP 31758).